A 262-amino-acid chain; its full sequence is Type III pantothenate kinase (262 aa).

6–13 contributes to the ATP binding site; it reads DVGNTNAV. Substrate is bound by residues tyrosine 100 and 107-110; that span reads GADR. Aspartate 109 (proton acceptor) is an active-site residue. Aspartate 129 is a K(+) binding site. Threonine 132 provides a ligand contact to ATP. Residue threonine 184 participates in substrate binding.

Belongs to the type III pantothenate kinase family. As to quaternary structure, homodimer. NH4(+) is required as a cofactor. K(+) serves as cofactor.

The protein resides in the cytoplasm. It catalyses the reaction (R)-pantothenate + ATP = (R)-4'-phosphopantothenate + ADP + H(+). Its pathway is cofactor biosynthesis; coenzyme A biosynthesis; CoA from (R)-pantothenate: step 1/5. In terms of biological role, catalyzes the phosphorylation of pantothenate (Pan), the first step in CoA biosynthesis. This Bacillus anthracis (strain A0248) protein is Type III pantothenate kinase.